The following is a 733-amino-acid chain: Folic acid synthesis protein fol1 (733 aa).

DHNA regions lie at residues 55-167 and 179-277; these read VVVE…YAER and IEFS…QIYR. At Tyr281 the chain carries Phosphotyrosine. An HPK region spans residues 295-454; sequence NKIAYLSFGS…LPSQGIRLYS (160 aa). Residues 465-724 form the Pterin-binding domain; sequence ALTMGILNVT…DTKEMSKVVG (260 aa). The interval 467 to 733 is DHPS; that stretch reads TMGILNVTPD…GMANAIRYVP (267 aa). Asn472 is a binding site for Mg(2+). Residues Thr511, Asp546, Asn565, Asp637, Lys677, and 712–714 contribute to the (7,8-dihydropterin-6-yl)methyl diphosphate site; that span reads RVH.

The protein in the N-terminal section; belongs to the DHNA family. It in the central section; belongs to the HPPK family. In the C-terminal section; belongs to the DHPS family. Requires Mg(2+) as cofactor.

It localises to the cytoplasm. The enzyme catalyses 7,8-dihydroneopterin = 6-hydroxymethyl-7,8-dihydropterin + glycolaldehyde. It carries out the reaction 6-hydroxymethyl-7,8-dihydropterin + ATP = (7,8-dihydropterin-6-yl)methyl diphosphate + AMP + H(+). The catalysed reaction is (7,8-dihydropterin-6-yl)methyl diphosphate + 4-aminobenzoate = 7,8-dihydropteroate + diphosphate. It functions in the pathway cofactor biosynthesis; tetrahydrofolate biosynthesis; 2-amino-4-hydroxy-6-hydroxymethyl-7,8-dihydropteridine diphosphate from 7,8-dihydroneopterin triphosphate: step 3/4. Its pathway is cofactor biosynthesis; tetrahydrofolate biosynthesis; 2-amino-4-hydroxy-6-hydroxymethyl-7,8-dihydropteridine diphosphate from 7,8-dihydroneopterin triphosphate: step 4/4. The protein operates within cofactor biosynthesis; tetrahydrofolate biosynthesis; 7,8-dihydrofolate from 2-amino-4-hydroxy-6-hydroxymethyl-7,8-dihydropteridine diphosphate and 4-aminobenzoate: step 1/2. Catalyzes three sequential steps of tetrahydrofolate biosynthesis. The polypeptide is Folic acid synthesis protein fol1 (fol1) (Schizosaccharomyces pombe (strain 972 / ATCC 24843) (Fission yeast)).